The following is a 63-amino-acid chain: Large ribosomal subunit protein uL29 (63 aa).

Belongs to the universal ribosomal protein uL29 family.

The chain is Large ribosomal subunit protein uL29 from Photorhabdus laumondii subsp. laumondii (strain DSM 15139 / CIP 105565 / TT01) (Photorhabdus luminescens subsp. laumondii).